A 362-amino-acid polypeptide reads, in one-letter code: Probable prephenate dehydrogenase NovF (362 aa).

A Prephenate/arogenate dehydrogenase domain is found at 2-283 (RTAVIIGTGM…GIDGSNRVPG (282 aa)).

The protein belongs to the prephenate/arogenate dehydrogenase family.

The enzyme catalyses prephenate + NAD(+) = 3-(4-hydroxyphenyl)pyruvate + CO2 + NADH. It participates in antibiotic biosynthesis; novobiocin biosynthesis. Probable prephenate dehydrogenase that produces 4-hydroxyphenylpyruvate (4HPP) in the novobiocin biosynthesis pathway. Novobiocin is an aminocoumarin family antibiotic that targets bacterial DNA gyrases. This Streptomyces niveus (Streptomyces spheroides) protein is Probable prephenate dehydrogenase NovF (novF).